Here is a 120-residue protein sequence, read N- to C-terminus: NAD(P)H-quinone oxidoreductase subunit 3, chloroplastic (120 aa).

A run of 3 helical transmembrane segments spans residues 2–22 (FLLY…VIPI), 64–84 (MFAL…PWAL), and 88–108 (ILGV…VLGL).

It belongs to the complex I subunit 3 family. As to quaternary structure, NDH is composed of at least 16 different subunits, 5 of which are encoded in the nucleus.

It is found in the plastid. The protein resides in the chloroplast thylakoid membrane. It catalyses the reaction a plastoquinone + NADH + (n+1) H(+)(in) = a plastoquinol + NAD(+) + n H(+)(out). The enzyme catalyses a plastoquinone + NADPH + (n+1) H(+)(in) = a plastoquinol + NADP(+) + n H(+)(out). In terms of biological role, NDH shuttles electrons from NAD(P)H:plastoquinone, via FMN and iron-sulfur (Fe-S) centers, to quinones in the photosynthetic chain and possibly in a chloroplast respiratory chain. The immediate electron acceptor for the enzyme in this species is believed to be plastoquinone. Couples the redox reaction to proton translocation, and thus conserves the redox energy in a proton gradient. The sequence is that of NAD(P)H-quinone oxidoreductase subunit 3, chloroplastic from Oenothera biennis (German evening primrose).